We begin with the raw amino-acid sequence, 485 residues long: Putative aldehyde dehydrogenase AldY (485 aa).

231-236 contributes to the NAD(+) binding site; sequence GSTAVG. Active-site residues include Glu253 and Cys287.

Belongs to the aldehyde dehydrogenase family.

The enzyme catalyses an aldehyde + NAD(+) + H2O = a carboxylate + NADH + 2 H(+). May contribute to protect cells against stress due to ethanol and related compounds. In Bacillus subtilis (strain 168), this protein is Putative aldehyde dehydrogenase AldY (aldY).